We begin with the raw amino-acid sequence, 57 residues long: Plasma membrane proteolipid 3 (57 aa).

The helical transmembrane segment at 34-54 threads the bilayer; it reads INILLTILGYLPGIVHALYII.

This sequence belongs to the UPF0057 (PMP3) family.

It localises to the cell membrane. Its function is as follows. Plays a role in the regulation of membrane potential. Could mediate a proton leak. The protein is Plasma membrane proteolipid 3 (pmp-1) of Neurospora crassa (strain ATCC 24698 / 74-OR23-1A / CBS 708.71 / DSM 1257 / FGSC 987).